The primary structure comprises 195 residues: Imidazoleglycerol-phosphate dehydratase (195 aa).

It belongs to the imidazoleglycerol-phosphate dehydratase family.

The protein resides in the cytoplasm. It carries out the reaction D-erythro-1-(imidazol-4-yl)glycerol 3-phosphate = 3-(imidazol-4-yl)-2-oxopropyl phosphate + H2O. It functions in the pathway amino-acid biosynthesis; L-histidine biosynthesis; L-histidine from 5-phospho-alpha-D-ribose 1-diphosphate: step 6/9. The sequence is that of Imidazoleglycerol-phosphate dehydratase from Geobacillus sp. (strain WCH70).